A 292-amino-acid chain; its full sequence is Calcium-binding protein CBP (292 aa).

The interval M1 to P80 is disordered. Residues Y12–G21 show a composition bias toward gly residues. A compositionally biased stretch (pro residues) spans A22–A40. EF-hand domains follow at residues G121–S156 and Y187–S222. D134, D136, S138, M140, E145, D200, D202, S204, K206, and E211 together coordinate Ca(2+).

Functionally, potential calcium sensor. The sequence is that of Calcium-binding protein CBP from Oryza sativa subsp. japonica (Rice).